The sequence spans 109 residues: Ubiquitin-related modifier 1 homolog (109 aa).

Residue Gly109 is modified to 1-thioglycine. A Glycyl lysine isopeptide (Gly-Lys) (interchain with K-? in acceptor proteins) cross-link involves residue Gly109.

The protein belongs to the URM1 family. C-terminal thiocarboxylation occurs in 2 steps, it is first acyl-adenylated (-COAMP) via the hesA/moeB/thiF part of the MOCS3 homolog, then thiocarboxylated (-COSH) via the rhodanese domain of the MOCS3 homolog.

It localises to the cytoplasm. It participates in tRNA modification; 5-methoxycarbonylmethyl-2-thiouridine-tRNA biosynthesis. Functionally, acts as a sulfur carrier required for 2-thiolation of mcm(5)S(2)U at tRNA wobble positions of cytosolic tRNA(Lys), tRNA(Glu) and tRNA(Gln). Serves as sulfur donor in tRNA 2-thiolation reaction by being thiocarboxylated (-COSH) at its C-terminus by MOCS3. The sulfur is then transferred to tRNA to form 2-thiolation of mcm(5)S(2)U. Also acts as a ubiquitin-like protein (UBL) that is covalently conjugated via an isopeptide bond to lysine residues of target proteins. The thiocarboxylated form serves as substrate for conjugation and oxidative stress specifically induces the formation of UBL-protein conjugates. This is Ubiquitin-related modifier 1 homolog from Culex quinquefasciatus (Southern house mosquito).